Consider the following 208-residue polypeptide: Outer-membrane lipoprotein carrier protein (208 aa).

The N-terminal stretch at 1 to 25 is a signal peptide; that stretch reads MKKRFSAKLFSALVLSISFFSAANA.

The protein belongs to the LolA family. Monomer.

The protein resides in the periplasm. Its function is as follows. Participates in the translocation of lipoproteins from the inner membrane to the outer membrane. Only forms a complex with a lipoprotein if the residue after the N-terminal Cys is not an aspartate (The Asp acts as a targeting signal to indicate that the lipoprotein should stay in the inner membrane). The chain is Outer-membrane lipoprotein carrier protein from Vibrio parahaemolyticus serotype O3:K6 (strain RIMD 2210633).